Here is a 121-residue protein sequence, read N- to C-terminus: Conopressin-conophysin (121 aa).

The first 20 residues, 1 to 20 (MGRLTMALCWLLLLLLTTQA), serve as a signal peptide directing secretion. An intrachain disulfide couples Cys21 to Cys26. A 4-hydroxyproline; partial; in Conopressin-ba1c modification is found at Pro27. Gly29 bears the Glycine amide mark. Cystine bridges form between Cys43–Cys83, Cys46–Cys57, Cys51–Cys73, Cys58–Cys63, Cys90–Cys108, Cys102–Cys120, and Cys109–Cys114.

It belongs to the vasopressin/oxytocin family. In terms of tissue distribution, expressed by the venom duct.

It is found in the secreted. This Conus bayani (Bayan's cone) protein is Conopressin-conophysin.